A 247-amino-acid polypeptide reads, in one-letter code: Ribonuclease PH (247 aa).

Phosphate contacts are provided by residues Arg90 and 128 to 130 (GTR).

It belongs to the RNase PH family. In terms of assembly, homohexameric ring arranged as a trimer of dimers.

It catalyses the reaction tRNA(n+1) + phosphate = tRNA(n) + a ribonucleoside 5'-diphosphate. In terms of biological role, phosphorolytic 3'-5' exoribonuclease that plays an important role in tRNA 3'-end maturation. Removes nucleotide residues following the 3'-CCA terminus of tRNAs; can also add nucleotides to the ends of RNA molecules by using nucleoside diphosphates as substrates, but this may not be physiologically important. Probably plays a role in initiation of 16S rRNA degradation (leading to ribosome degradation) during starvation. The protein is Ribonuclease PH of Synechococcus sp. (strain CC9605).